Consider the following 244-residue polypeptide: Exosome complex component Rrp41 (244 aa).

The protein belongs to the RNase PH family. Rrp41 subfamily. Component of the archaeal exosome complex. Forms a hexameric ring-like arrangement composed of 3 Rrp41-Rrp42 heterodimers. The hexameric ring associates with a trimer of Rrp4 and/or Csl4 subunits.

It is found in the cytoplasm. Catalytic component of the exosome, which is a complex involved in RNA degradation. Has 3'-&gt;5' exoribonuclease activity. Can also synthesize heteromeric RNA-tails. This is Exosome complex component Rrp41 from Nitrosopumilus maritimus (strain SCM1).